Here is a 554-residue protein sequence, read N- to C-terminus: Probable pectinesterase/pectinesterase inhibitor 6 (554 aa).

The signal sequence occupies residues methionine 1 to alanine 32. The pectinesterase inhibitor 6 stretch occupies residues histidine 29–valine 183. Asparagine 119 and asparagine 172 each carry an N-linked (GlcNAc...) asparagine glycan. The interval aspartate 250–asparagine 540 is pectinesterase 6. Residues threonine 327 and glutamine 357 each coordinate substrate. The active-site Proton donor; for pectinesterase activity is the aspartate 380. A disulfide bridge links cysteine 394 with cysteine 414. Aspartate 401 functions as the Nucleophile; for pectinesterase activity in the catalytic mechanism. Residues arginine 460 and tryptophan 462 each contribute to the substrate site.

The protein in the N-terminal section; belongs to the PMEI family. It in the C-terminal section; belongs to the pectinesterase family. As to expression, expressed in rosette leaves, flower and siliques.

Its subcellular location is the secreted. It localises to the cell wall. It carries out the reaction [(1-&gt;4)-alpha-D-galacturonosyl methyl ester](n) + n H2O = [(1-&gt;4)-alpha-D-galacturonosyl](n) + n methanol + n H(+). Its pathway is glycan metabolism; pectin degradation; 2-dehydro-3-deoxy-D-gluconate from pectin: step 1/5. Functionally, acts in the modification of cell walls via demethylesterification of cell wall pectin. In Arabidopsis thaliana (Mouse-ear cress), this protein is Probable pectinesterase/pectinesterase inhibitor 6 (PME6).